Reading from the N-terminus, the 239-residue chain is Immunoglobulin superfamily member 23 (239 aa).

The interval 63-93 (ELEAQPPTSSSPKGLPGRPRTSQEVPNAEDN) is disordered. An Ig-like domain is found at 94–179 (PSLIPLVTFP…ELVSEPVTVS (86 aa)). A helical membrane pass occupies residues 214 to 234 (LIVAATIGGLVLIGSVCFYIL).

It localises to the cell membrane. Its function is as follows. May be involved in osteoclast differentiation. The polypeptide is Immunoglobulin superfamily member 23 (Mus musculus (Mouse)).